Here is a 115-residue protein sequence, read N- to C-terminus: U3-lycotoxin-Ls1a (115 aa).

The signal sequence occupies residues 1–20 (MKFVLLFGVFLVTLFSYSSA). The propeptide occupies 21 to 44 (EMLDDFGQADEDELLSLIEKEEAR). 4 disulfides stabilise this stretch: Cys-48-Cys-63, Cys-55-Cys-72, Cys-62-Cys-87, and Cys-74-Cys-85.

Belongs to the neurotoxin 19 (CSTX) family. 01 subfamily. Expressed by the venom gland.

It is found in the secreted. This is U3-lycotoxin-Ls1a from Lycosa singoriensis (Wolf spider).